A 363-amino-acid polypeptide reads, in one-letter code: Peroxidase (363 aa).

The N-terminal stretch at 1-20 is a signal peptide; it reads MKLSLLSTFAAVIIGALALP. Residue Gln-21 is modified to Pyrrolidone carboxylic acid. Cystine bridges form between Cys-31-Cys-43, Cys-42-Cys-312, Cys-62-Cys-148, and Cys-276-Cys-341. The active-site Proton acceptor is His-75. Asp-76, Gly-94, Asp-96, and Ser-98 together coordinate Ca(2+). N-linked (GlcNAc...) (high mannose) asparagine glycosylation is present at Asn-162. His-203 contributes to the heme b binding site. Ser-204, Asp-221, Thr-223, Val-226, and Asp-228 together coordinate Ca(2+). O-linked (Man...) serine glycosylation is present at Ser-358.

Belongs to the peroxidase family. Ligninase subfamily. Ca(2+) is required as a cofactor. It depends on heme b as a cofactor.

The protein localises to the secreted. The catalysed reaction is 2 a phenolic donor + H2O2 = 2 a phenolic radical donor + 2 H2O. In Coprinopsis cinerea (strain Okayama-7 / 130 / ATCC MYA-4618 / FGSC 9003) (Inky cap fungus), this protein is Peroxidase (CIP1).